Here is a 407-residue protein sequence, read N- to C-terminus: Vancomycin aglycone glucosyltransferase (407 aa).

It belongs to the glycosyltransferase 28 family.

The enzyme catalyses vancomycin aglycone + UDP-alpha-D-glucose = devancoaminyl-vancomycin + UDP. It functions in the pathway antibiotic biosynthesis; vancomycin biosynthesis. In terms of biological role, glucosyltransferase that transfers glucose to the 4-OH-Phegly(4) residue of vancomycin aglycone (AGV) to produce devancoaminyl-vancomycin (DVV) in the biosynthesis of glycopeptide antibiotic chloroeremomycin, a member of the vancomycin group of antibiotics. This chain is Vancomycin aglycone glucosyltransferase (gtfB), found in Amycolatopsis orientalis (Nocardia orientalis).